Here is a 114-residue protein sequence, read N- to C-terminus: Cytochrome c2 (114 aa).

At Gln1 the chain carries Pyrrolidone carboxylic acid. Positions 13, 16, 17, and 93 each coordinate heme c.

Belongs to the cytochrome c family. Binds 1 heme c group covalently per subunit.

It is found in the periplasm. Functionally, cytochrome c2 is found mainly in purple, non-sulfur, photosynthetic bacteria where it functions as the electron donor to the oxidized bacteriochlorophyll in the photophosphorylation pathway. However, it may also have a role in the respiratory chain and is found in some non-photosynthetic bacteria. The chain is Cytochrome c2 from Rhodopseudomonas palustris.